A 338-amino-acid polypeptide reads, in one-letter code: Phosphate acyltransferase (338 aa).

This sequence belongs to the PlsX family. As to quaternary structure, homodimer. Probably interacts with PlsY.

It is found in the cytoplasm. It carries out the reaction a fatty acyl-[ACP] + phosphate = an acyl phosphate + holo-[ACP]. Its pathway is lipid metabolism; phospholipid metabolism. Catalyzes the reversible formation of acyl-phosphate (acyl-PO(4)) from acyl-[acyl-carrier-protein] (acyl-ACP). This enzyme utilizes acyl-ACP as fatty acyl donor, but not acyl-CoA. In Gloeobacter violaceus (strain ATCC 29082 / PCC 7421), this protein is Phosphate acyltransferase.